We begin with the raw amino-acid sequence, 374 residues long: Carbamoyl phosphate synthase small chain (374 aa).

The CPSase stretch occupies residues 1-186 (MTEHAILVLE…DRNECKRAAP (186 aa)). S47, G237, and G239 together coordinate L-glutamine. Residues 189-374 (KVVAYDYGVK…RFITMMAAQS (186 aa)) form the Glutamine amidotransferase type-1 domain. C265 functions as the Nucleophile in the catalytic mechanism. L-glutamine contacts are provided by L266, Q269, N307, G309, and F310. Catalysis depends on residues H349 and E351.

It belongs to the CarA family. As to quaternary structure, composed of two chains; the small (or glutamine) chain promotes the hydrolysis of glutamine to ammonia, which is used by the large (or ammonia) chain to synthesize carbamoyl phosphate. Tetramer of heterodimers (alpha,beta)4.

The enzyme catalyses hydrogencarbonate + L-glutamine + 2 ATP + H2O = carbamoyl phosphate + L-glutamate + 2 ADP + phosphate + 2 H(+). The catalysed reaction is L-glutamine + H2O = L-glutamate + NH4(+). It participates in amino-acid biosynthesis; L-arginine biosynthesis; carbamoyl phosphate from bicarbonate: step 1/1. Its pathway is pyrimidine metabolism; UMP biosynthesis via de novo pathway; (S)-dihydroorotate from bicarbonate: step 1/3. Its function is as follows. Small subunit of the glutamine-dependent carbamoyl phosphate synthetase (CPSase). CPSase catalyzes the formation of carbamoyl phosphate from the ammonia moiety of glutamine, carbonate, and phosphate donated by ATP, constituting the first step of 2 biosynthetic pathways, one leading to arginine and/or urea and the other to pyrimidine nucleotides. The small subunit (glutamine amidotransferase) binds and cleaves glutamine to supply the large subunit with the substrate ammonia. This chain is Carbamoyl phosphate synthase small chain, found in Xylella fastidiosa (strain Temecula1 / ATCC 700964).